The sequence spans 338 residues: Malate dehydrogenase, mitochondrial (338 aa).

Residues M1–N24 constitute a mitochondrion transit peptide. Residues G31–G37 and D57 contribute to the NAD(+) site. S33 carries an O-linked (GlcNAc) serine glycan. N6-acetyllysine; alternate is present on residues K78 and K91. An N6-succinyllysine; alternate mark is found at K78 and K91. R104 and R110 together coordinate substrate. NAD(+) is bound by residues N117 and I140–N142. Substrate is bound at residue N142. K165 is subject to N6-acetyllysine. R176 lines the substrate pocket. At K185 the chain carries N6-acetyllysine; alternate. K185 carries the post-translational modification N6-succinyllysine; alternate. H200 acts as the Proton acceptor in catalysis. The residue at position 203 (K203) is an N6-succinyllysine. 2 positions are modified to N6-acetyllysine; alternate: K215 and K239. N6-succinyllysine; alternate occurs at positions 215 and 239. K239 carries the N6-malonyllysine; alternate modification. S246 is subject to Phosphoserine. M251 provides a ligand contact to NAD(+). An N6-succinyllysine modification is found at K269. N6-acetyllysine; alternate occurs at positions 296, 301, 307, 314, and 324. An N6-succinyllysine; alternate mark is found at K296, K301, K307, K314, and K324. K307 bears the N6-malonyllysine; alternate mark. S326 carries the post-translational modification Phosphoserine. 3 positions are modified to N6-acetyllysine; alternate: K328, K329, and K335. K328 is modified (N6-succinyllysine; alternate). Residue K329 is modified to N6-malonyllysine; alternate. Residue K335 is modified to N6-succinyllysine; alternate.

Belongs to the LDH/MDH superfamily. MDH type 1 family. As to quaternary structure, homodimer. Acetylation is enhanced after treatment either with trichostin A (TCA) or with nicotinamide (NAM) with the appearance of tri- and tetraacetylations. Glucose also increases acetylation. In terms of tissue distribution, expressed in flagella of epididymal sperm.

It is found in the mitochondrion matrix. It catalyses the reaction (S)-malate + NAD(+) = oxaloacetate + NADH + H(+). Enzyme activity is enhanced by acetylation. The protein is Malate dehydrogenase, mitochondrial (Mdh2) of Rattus norvegicus (Rat).